The primary structure comprises 488 residues: Membrane-bound lytic murein transglycosylase F (488 aa).

Residues 1 to 25 (MFARPAIRMRCATGLLAIGTLLMLA) form the signal peptide. The interval 26 to 269 (GCGEEPKPSV…RLKERYYGHV (244 aa)) is non-LT domain. Positions 270 to 488 (DVLGYVGAYT…RTLDEQTPPL (219 aa)) are LT domain. The active site involves Glu-316.

The protein in the N-terminal section; belongs to the bacterial solute-binding protein 3 family. In the C-terminal section; belongs to the transglycosylase Slt family.

Its subcellular location is the cell outer membrane. The enzyme catalyses Exolytic cleavage of the (1-&gt;4)-beta-glycosidic linkage between N-acetylmuramic acid (MurNAc) and N-acetylglucosamine (GlcNAc) residues in peptidoglycan, from either the reducing or the non-reducing ends of the peptidoglycan chains, with concomitant formation of a 1,6-anhydrobond in the MurNAc residue.. Functionally, murein-degrading enzyme that degrades murein glycan strands and insoluble, high-molecular weight murein sacculi, with the concomitant formation of a 1,6-anhydromuramoyl product. Lytic transglycosylases (LTs) play an integral role in the metabolism of the peptidoglycan (PG) sacculus. Their lytic action creates space within the PG sacculus to allow for its expansion as well as for the insertion of various structures such as secretion systems and flagella. This is Membrane-bound lytic murein transglycosylase F from Ectopseudomonas mendocina (strain ymp) (Pseudomonas mendocina).